Here is a 126-residue protein sequence, read N- to C-terminus: Holo-[acyl-carrier-protein] synthase (126 aa).

The Mg(2+) site is built by Asp9 and Glu58.

This sequence belongs to the P-Pant transferase superfamily. AcpS family. It depends on Mg(2+) as a cofactor.

The protein resides in the cytoplasm. It catalyses the reaction apo-[ACP] + CoA = holo-[ACP] + adenosine 3',5'-bisphosphate + H(+). Functionally, transfers the 4'-phosphopantetheine moiety from coenzyme A to a Ser of acyl-carrier-protein. The chain is Holo-[acyl-carrier-protein] synthase from Escherichia coli (strain ATCC 8739 / DSM 1576 / NBRC 3972 / NCIMB 8545 / WDCM 00012 / Crooks).